Here is a 122-residue protein sequence, read N- to C-terminus: Small ribosomal subunit protein uS13 (122 aa).

The segment at 95 to 122 (SLPCRGQRTSTNARTRKGPKRAAVKKKK) is disordered. Residues 108-122 (RTRKGPKRAAVKKKK) show a composition bias toward basic residues.

Belongs to the universal ribosomal protein uS13 family. Part of the 30S ribosomal subunit. Forms a loose heterodimer with protein S19. Forms two bridges to the 50S subunit in the 70S ribosome.

Functionally, located at the top of the head of the 30S subunit, it contacts several helices of the 16S rRNA. In the 70S ribosome it contacts the 23S rRNA (bridge B1a) and protein L5 of the 50S subunit (bridge B1b), connecting the 2 subunits; these bridges are implicated in subunit movement. Contacts the tRNAs in the A and P-sites. This Desulforapulum autotrophicum (strain ATCC 43914 / DSM 3382 / VKM B-1955 / HRM2) (Desulfobacterium autotrophicum) protein is Small ribosomal subunit protein uS13.